The following is a 265-amino-acid chain: Imidazole glycerol phosphate synthase subunit HisF (265 aa).

Residues Asp17 and Asp136 contribute to the active site.

Belongs to the HisA/HisF family. In terms of assembly, heterodimer of HisH and HisF.

The protein localises to the cytoplasm. It catalyses the reaction 5-[(5-phospho-1-deoxy-D-ribulos-1-ylimino)methylamino]-1-(5-phospho-beta-D-ribosyl)imidazole-4-carboxamide + L-glutamine = D-erythro-1-(imidazol-4-yl)glycerol 3-phosphate + 5-amino-1-(5-phospho-beta-D-ribosyl)imidazole-4-carboxamide + L-glutamate + H(+). It functions in the pathway amino-acid biosynthesis; L-histidine biosynthesis; L-histidine from 5-phospho-alpha-D-ribose 1-diphosphate: step 5/9. Functionally, IGPS catalyzes the conversion of PRFAR and glutamine to IGP, AICAR and glutamate. The HisF subunit catalyzes the cyclization activity that produces IGP and AICAR from PRFAR using the ammonia provided by the HisH subunit. The protein is Imidazole glycerol phosphate synthase subunit HisF of Mycolicibacterium paratuberculosis (strain ATCC BAA-968 / K-10) (Mycobacterium paratuberculosis).